A 371-amino-acid polypeptide reads, in one-letter code: DNA replication and repair protein RecF (371 aa).

30-37 (GPNAQGKT) is an ATP binding site.

It belongs to the RecF family.

The protein localises to the cytoplasm. The RecF protein is involved in DNA metabolism; it is required for DNA replication and normal SOS inducibility. RecF binds preferentially to single-stranded, linear DNA. It also seems to bind ATP. This is DNA replication and repair protein RecF from Desulforamulus reducens (strain ATCC BAA-1160 / DSM 100696 / MI-1) (Desulfotomaculum reducens).